The following is a 479-amino-acid chain: Ribulose bisphosphate carboxylase large chain (479 aa).

A propeptide spanning residues 1–2 (MS) is cleaved from the precursor. Substrate contacts are provided by Asn-123 and Thr-173. Residue Lys-175 is the Proton acceptor of the active site. Residue Lys-177 coordinates substrate. Mg(2+)-binding residues include Lys-201, Asp-203, and Glu-204. Lys-201 is subject to N6-carboxylysine. Position 208 is a phosphoserine (Ser-208). The Proton acceptor role is filled by His-294. Arg-295 and His-327 together coordinate substrate. Residue Thr-330 is modified to Phosphothreonine. Residue Ser-379 participates in substrate binding.

It belongs to the RuBisCO large chain family. Type I subfamily. In terms of assembly, heterohexadecamer of 8 large chains and 8 small chains; disulfide-linked. The disulfide link is formed within the large subunit homodimers. Requires Mg(2+) as cofactor. In terms of processing, the disulfide bond which can form in the large chain dimeric partners within the hexadecamer appears to be associated with oxidative stress and protein turnover.

Its subcellular location is the plastid. It is found in the chloroplast. The catalysed reaction is 2 (2R)-3-phosphoglycerate + 2 H(+) = D-ribulose 1,5-bisphosphate + CO2 + H2O. It catalyses the reaction D-ribulose 1,5-bisphosphate + O2 = 2-phosphoglycolate + (2R)-3-phosphoglycerate + 2 H(+). In terms of biological role, ruBisCO catalyzes two reactions: the carboxylation of D-ribulose 1,5-bisphosphate, the primary event in carbon dioxide fixation, as well as the oxidative fragmentation of the pentose substrate in the photorespiration process. Both reactions occur simultaneously and in competition at the same active site. This is Ribulose bisphosphate carboxylase large chain from Olimarabidopsis pumila (Dwarf rocket).